Consider the following 28-residue polypeptide: 50 kDa venom protease (28 aa).

This sequence belongs to the venom metalloproteinase (M12B) family. The cofactor is Zn(2+). Expressed by the venom gland.

The protein localises to the secreted. This is 50 kDa venom protease from Proatheris superciliaris (Lowland swamp viper).